The following is a 991-amino-acid chain: Gingipain R1 (991 aa).

The first 24 residues, 1 to 24, serve as a signal peptide directing secretion; it reads MKNLNKFVSIALCSSLLGGMAFAQ. Positions 25–227 are excised as a propeptide; it reads QTELGRNPNV…RMFMNYEPGR (203 aa). Ca(2+) is bound by residues Asp305, Val327, Asp330, Tyr332, Glu334, Glu388, and His393. The active-site Proton donor is His438. Cys471 acts as the Nucleophile in catalysis. Phe476, Glu485, Asp519, Glu520, Glu523, and His529 together coordinate Ca(2+).

Belongs to the peptidase C25 family.

The protein resides in the secreted. It catalyses the reaction Hydrolysis of proteins and small molecule substrates, with a preference for Arg in P1.. Requires cysteine for activation and Ca(2+) and/or Mg(2+) for stabilization. It is stimulated by glycine-containing dipeptides. It is resistant to inhibition by proteinase inhibitors in human plasma. Thiol protease. Acts synergistically with RgpB to catalyze the maturation of fimbrial subunits, such as FimA. Its proteolytic activity is a major factor in both periodontal tissue destruction and in evasion of host defense mechanisms. This is Gingipain R1 (rgpA) from Porphyromonas gingivalis (Bacteroides gingivalis).